Consider the following 193-residue polypeptide: Superoxide dismutase [Fe] (193 aa).

4 residues coordinate Fe cation: His27, His74, Asp157, and His161.

Belongs to the iron/manganese superoxide dismutase family. As to quaternary structure, monomer. The cofactor is Fe cation.

It catalyses the reaction 2 superoxide + 2 H(+) = H2O2 + O2. Destroys superoxide anion radicals which are normally produced within the cells and which are toxic to biological systems. Involved in the metabolism of 4-aminophenol. May have an indirect role in hydroxyquinol metabolism by scavenging and detoxifying reactive species that promote its auto-oxidation. The chain is Superoxide dismutase [Fe] from Burkholderia sp.